Consider the following 212-residue polypeptide: Protein Nef (212 aa).

The N-myristoyl glycine; by host moiety is linked to residue G2. S6 bears the Phosphoserine; by host mark. The tract at residues 67–71 is acidic; interacts with host PACS1 and PACS2; stabilizes the interaction of NEF/MHC-I with host AP1M1; necessary for MHC-I internalization; it reads EEEEE. The tract at residues 75 to 84 is SH3-binding; interaction with Src family tyrosine kinases; the sequence is PVRPQVPLRP. A PxxP; stabilizes the interaction of NEF/MHC-I with host AP1M1; necessary for MHC-I internalization motif is present at residues 78–81; the sequence is PQVP. The interval 114–130 is mediates dimerization, Nef-PTE1 interaction; sequence DILDLWMYHTQGILPDW. Residues 154 to 186 form a binding to ATP6V1H region; it reads LSAEEVEEANEGDNNALLHPICQHGADDDHKEV. The Dileucine internalization motif; necessary for CD4 internalization signature appears at 170–171; the sequence is LL. The Diacidic; necessary for CD4 internalization motif lies at 180–181; it reads DD.

It belongs to the lentivirus primate group Nef protein family. As to quaternary structure, monomer; cytosolic form. Homodimer; membrane bound form. Interacts with Nef associated p21-activated kinase (PAK2); this interaction activates PAK2. Associates with the Nef-MHC-I-AP1 complex; this complex is required for MHC-I internalization. Interacts (via C-terminus) with host PI3-kinase. Interacts with host PACS1; this interaction seems to be weak. Interacts with host PACS2. Interacts with host LCK and MAPK3; these interactions inhibit the kinase activity of the latter. Interacts with host ATP6V1H; this interaction may play a role in CD4 endocytosis. Associates with the CD4-Nef-AP2 complex; this complex is required for CD4 internalization. Interacts with host AP2 subunit alpha and AP2 subunit sigma2. Interacts with TCR-zeta chain; this interaction up-regulates the Fas ligand (FasL) surface expression. Interacts with host HCK, LYN, and SRC; these interactions activate the Src family kinases. Interacts with MAP3K5; this interaction inhibits the Fas and TNFR-mediated death signals. Interacts with beta-COP and PTE1. Interacts with human RACK1; this increases Nef phosphorylation by PKC. Interacts with TP53; this interaction decreases the half-life of TP53, protecting the infected cell against p53-mediated apoptosis. The virion-associated Nef proteins are cleaved by the viral protease to release the soluble C-terminal core protein. Nef is probably cleaved concomitantly with viral structural proteins on maturation of virus particles. In terms of processing, myristoylated. Post-translationally, phosphorylated on serine residues, probably by host PKCdelta and theta.

It localises to the host cell membrane. Its subcellular location is the virion. It is found in the secreted. The protein resides in the host Golgi apparatus membrane. Factor of infectivity and pathogenicity, required for optimal virus replication. Alters numerous pathways of T-lymphocyte function and down-regulates immunity surface molecules in order to evade host defense and increase viral infectivity. Alters the functionality of other immunity cells, like dendritic cells, monocytes/macrophages and NK cells. Functionally, in infected CD4(+) T-lymphocytes, down-regulates the surface MHC-I, mature MHC-II, CD4, CD28, CCR5 and CXCR4 molecules. Mediates internalization and degradation of host CD4 through the interaction of with the cytoplasmic tail of CD4, the recruitment of AP-2 (clathrin adapter protein complex 2), internalization through clathrin coated pits, and subsequent transport to endosomes and lysosomes for degradation. Diverts host MHC-I molecules to the trans-Golgi network-associated endosomal compartments by an endocytic pathway to finally target them for degradation. MHC-I down-regulation may involve AP-1 (clathrin adapter protein complex 1) or possibly Src family kinase-ZAP70/Syk-PI3K cascade recruited by PACS2. In consequence infected cells are masked for immune recognition by cytotoxic T-lymphocytes. Decreasing the number of immune receptors also prevents reinfection by more HIV particles (superinfection). Down-regulates host SERINC3 and SERINC5 thereby excluding these proteins from the viral particles. Virion infectivity is drastically higher when SERINC3 or SERINC5 are excluded from the viral envelope, because these host antiviral proteins impair the membrane fusion event necessary for subsequent virion penetration. Its function is as follows. Bypasses host T-cell signaling by inducing a transcriptional program nearly identical to that of anti-CD3 cell activation. Interaction with TCR-zeta chain up-regulates the Fas ligand (FasL). Increasing surface FasL molecules and decreasing surface MHC-I molecules on infected CD4(+) cells send attacking cytotoxic CD8+ T-lymphocytes into apoptosis. In terms of biological role, plays a role in optimizing the host cell environment for viral replication without causing cell death by apoptosis. Protects the infected cells from apoptosis in order to keep them alive until the next virus generation is ready to strike. Inhibits the Fas and TNFR-mediated death signals by blocking MAP3K5/ASK1. Decreases the half-life of TP53, protecting the infected cell against p53-mediated apoptosis. Inhibits the apoptotic signals regulated by the Bcl-2 family proteins through the formation of a Nef/PI3-kinase/PAK2 complex that leads to activation of PAK2 and induces phosphorylation of host BAD. Extracellular Nef protein targets CD4(+) T-lymphocytes for apoptosis by interacting with CXCR4 surface receptors. This Human immunodeficiency virus type 1 group N (isolate YBF30) (HIV-1) protein is Protein Nef.